A 227-amino-acid polypeptide reads, in one-letter code: Cytochrome c oxidase subunit 2 (227 aa).

The Mitochondrial intermembrane segment spans residues 1–14; that stretch reads MAYPFQLGFQDATS. The helical transmembrane segment at 15–45 threads the bilayer; the sequence is PIMEELLHFHDHTLMIVFLISSLVLYIISSM. The Mitochondrial matrix portion of the chain corresponds to 46-59; sequence LTTKLTHTSTMDAQ. The helical transmembrane segment at 60–87 threads the bilayer; sequence EVETIWTILPAIILILIALPSLRILYMM. Over 88–227 the chain is Mitochondrial intermembrane; sequence DEINNPSLTV…HFEEWSASML (140 aa). Residues H161, C196, E198, C200, H204, and M207 each coordinate Cu cation. E198 provides a ligand contact to Mg(2+).

The protein belongs to the cytochrome c oxidase subunit 2 family. In terms of assembly, component of the cytochrome c oxidase (complex IV, CIV), a multisubunit enzyme composed of 14 subunits. The complex is composed of a catalytic core of 3 subunits MT-CO1, MT-CO2 and MT-CO3, encoded in the mitochondrial DNA, and 11 supernumerary subunits COX4I, COX5A, COX5B, COX6A, COX6B, COX6C, COX7A, COX7B, COX7C, COX8 and NDUFA4, which are encoded in the nuclear genome. The complex exists as a monomer or a dimer and forms supercomplexes (SCs) in the inner mitochondrial membrane with NADH-ubiquinone oxidoreductase (complex I, CI) and ubiquinol-cytochrome c oxidoreductase (cytochrome b-c1 complex, complex III, CIII), resulting in different assemblies (supercomplex SCI(1)III(2)IV(1) and megacomplex MCI(2)III(2)IV(2)). Found in a complex with TMEM177, COA6, COX18, COX20, SCO1 and SCO2. Interacts with TMEM177 in a COX20-dependent manner. Interacts with COX20. Interacts with COX16. Cu cation is required as a cofactor.

It localises to the mitochondrion inner membrane. The catalysed reaction is 4 Fe(II)-[cytochrome c] + O2 + 8 H(+)(in) = 4 Fe(III)-[cytochrome c] + 2 H2O + 4 H(+)(out). In terms of biological role, component of the cytochrome c oxidase, the last enzyme in the mitochondrial electron transport chain which drives oxidative phosphorylation. The respiratory chain contains 3 multisubunit complexes succinate dehydrogenase (complex II, CII), ubiquinol-cytochrome c oxidoreductase (cytochrome b-c1 complex, complex III, CIII) and cytochrome c oxidase (complex IV, CIV), that cooperate to transfer electrons derived from NADH and succinate to molecular oxygen, creating an electrochemical gradient over the inner membrane that drives transmembrane transport and the ATP synthase. Cytochrome c oxidase is the component of the respiratory chain that catalyzes the reduction of oxygen to water. Electrons originating from reduced cytochrome c in the intermembrane space (IMS) are transferred via the dinuclear copper A center (CU(A)) of subunit 2 and heme A of subunit 1 to the active site in subunit 1, a binuclear center (BNC) formed by heme A3 and copper B (CU(B)). The BNC reduces molecular oxygen to 2 water molecules using 4 electrons from cytochrome c in the IMS and 4 protons from the mitochondrial matrix. This chain is Cytochrome c oxidase subunit 2 (MT-CO2), found in Equus caballus (Horse).